Reading from the N-terminus, the 176-residue chain is uncharacterized protein (176 aa).

Polar residues predominate over residues 15–28; it reads TSSNPPASASQSTG. Disordered stretches follow at residues 15–100 and 125–176; these read TSSN…TSAG and ASLR…NLGA. Over residues 43 to 52 the composition is skewed to basic and acidic residues; that stretch reads FIDKVTDKPS.

This is an uncharacterized protein from Homo sapiens (Human).